The chain runs to 437 residues: MMLRGVHRIFKCFYDVVLVCAFVIALPKLLYKMLVYGKYKKSLAVRFGLKKPHVPGEGPLVWFHGASVGEVRLLLPVLEKFCEEFPGWRCLVTSCTELGVQVASQVFIPMGATVSILPLDFSIIIKSVVAKLRPSLVVFSEGDCWLNFIEEAKRIGATTLVINGRISIDSSKRFKFLKRLGKNYFSPVDGFLLQDEVQKQRFLSLGIPEHKLQVTGNIKTYVAAQTALHLERETWRDRLRLPTDSKLVILGSMHRSDAGKWLPVVQKLIKEGVSVLWVPRHVEKTKDVEESLHRLHIPYGLWSRGANFSYVPVVVVDEIGLLKQLYVAGDLAFVGGTFDPKIGGHNLLEPLQCEVPLIFGPHITSQSELAQRLLLSGAGLCLDEIEPIIDTVSFLLNNQEVREAYVQKGKVFVKAETASFDRTWRALKSYIPLYKNS.

Residues 16–36 (VVLVCAFVIALPKLLYKMLVY) form a helical; Signal-anchor membrane-spanning segment. The active-site Proton acceptor is the Glu-70. Residues 279–280 (PR), 319–321 (IGL), and 346–349 (NLLE) each bind CMP.

This sequence belongs to the glycosyltransferase group 1 family. Glycosyltransferase 30 subfamily.

The protein localises to the cell inner membrane. It carries out the reaction lipid IVA (E. coli) + CMP-3-deoxy-beta-D-manno-octulosonate = alpha-Kdo-(2-&gt;6)-lipid IVA (E. coli) + CMP + H(+). It catalyses the reaction alpha-Kdo-(2-&gt;6)-lipid IVA (E. coli) + CMP-3-deoxy-beta-D-manno-octulosonate = alpha-Kdo-(2-&gt;4)-alpha-Kdo-(2-&gt;6)-lipid IVA (E. coli) + CMP + H(+). The catalysed reaction is alpha-Kdo-(2-&gt;4)-alpha-Kdo-(2-&gt;6)-lipid IVA (E. coli) + CMP-3-deoxy-beta-D-manno-octulosonate = alpha-Kdo-(2-&gt;8)-alpha-Kdo-(2-&gt;4)-alpha-Kdo-(2-&gt;6)-lipid IVA (E. coli) + CMP + H(+). It functions in the pathway bacterial outer membrane biogenesis; LPS core biosynthesis. Involved in lipopolysaccharide (LPS) biosynthesis. Catalyzes the transfer of three 3-deoxy-D-manno-octulosonate (Kdo) residues from CMP-Kdo to lipid IV(A), the tetraacyldisaccharide-1,4'-bisphosphate precursor of lipid A. Thus generates the genus-specific LPS epitope of Chlamydia, composed of the trisaccharide alpha-Kdo-(2-&gt;8)-alpha-Kdo-(2-&gt;4)-alpha-Kdo. This chain is 3-deoxy-D-manno-octulosonic acid transferase (waaA), found in Chlamydia pneumoniae (Chlamydophila pneumoniae).